Consider the following 225-residue polypeptide: O-methyltransferase rstn1 (225 aa).

Glutamine 97 and histidine 142 together coordinate S-adenosyl-L-methionine.

It belongs to the methyltransferase superfamily.

The catalysed reaction is desmethylrestrictinol + S-adenosyl-L-methionine = restrictinol + S-adenosyl-L-homocysteine + H(+). Its pathway is antifungal biosynthesis. Its function is as follows. O-methyltransferase; part of the gene cluster that mediates the biosynthesis of the tetrahydropyranyl antifungal agent restricticin that acts as an inhibitor of CYP51 and blocks the ergosterol biosynthesis. Within the pathway, rstn1 uses S-adenosylmethionine to methylate position C4 of desmethylrestrictinol to produce restrictinol. The highly reducing polyketide synthase rstn3, the short chain dehydrogenase rstn4, the cyclase rstn5, the FAD-dependent monooxygenase rstn6 and the enoylreductase rstn7 are required to generate the first stable intermediate desmethylrestrictinol. Rstn3 with rstn7 biosynthesize the first polyketide chain intermediate that is reduced by rstn4, followed by epoxidation by rstn6 before 6-endo cyclization via epoxide opening by rstn5 leads to desmethylrestrictinol. The methyltransferase rstn1 then catalyzes the C4 O-methylation of desmethylrestrictinol to produce restrictinol, and the nonribosomal peptide synthetase rstn8 catalyzes the C3 esterification of restrictinol with glycine that leads to restricticin. The polypeptide is O-methyltransferase rstn1 (Aspergillus nomiae NRRL (strain ATCC 15546 / NRRL 13137 / CBS 260.88 / M93)).